The following is a 167-amino-acid chain: Nascent polypeptide-associated complex subunit beta (167 aa).

2 disordered regions span residues 1–48 and 133–167; these read MDQA…GADD and QNMQKNQAGAEGKKDDEEDDIPDLVEGQDFESKVE. Residues 25-42 show a composition bias toward basic residues; sequence NRNRGKGTPRRKVKKVHK. In terms of domain architecture, NAC-A/B spans 45 to 110; it reads GADDKKLQAT…GEEKELTELV (66 aa). Positions 148–161 are enriched in acidic residues; that stretch reads DEEDDIPDLVEGQD.

Belongs to the NAC-beta family. As to quaternary structure, part of the nascent polypeptide-associated complex (NAC), consisting of egd2 and egd1. NAC associates with ribosomes via egd1.

Its subcellular location is the cytoplasm. It is found in the nucleus. Its function is as follows. Component of the nascent polypeptide-associated complex (NAC), a dynamic component of the ribosomal exit tunnel, protecting the emerging polypeptides from interaction with other cytoplasmic proteins to ensure appropriate nascent protein targeting. The NAC complex also promotes mitochondrial protein import by enhancing productive ribosome interactions with the outer mitochondrial membrane and blocks the inappropriate interaction of ribosomes translating non-secretory nascent polypeptides with translocation sites in the membrane of the endoplasmic reticulum. EGD1 may act as a transcription factor that exert a negative effect on the expression of several genes that are transcribed by RNA polymerase II. The chain is Nascent polypeptide-associated complex subunit beta (egd1) from Aspergillus terreus (strain NIH 2624 / FGSC A1156).